A 186-amino-acid polypeptide reads, in one-letter code: Potassium-transporting ATPase KdpC subunit (186 aa).

Residues 9–29 (AAVVLFGGCLLVLGLLYPLAM) form a helical membrane-spanning segment.

This sequence belongs to the KdpC family. In terms of assembly, the system is composed of three essential subunits: KdpA, KdpB and KdpC.

The protein localises to the cell membrane. Part of the high-affinity ATP-driven potassium transport (or Kdp) system, which catalyzes the hydrolysis of ATP coupled with the electrogenic transport of potassium into the cytoplasm. This subunit acts as a catalytic chaperone that increases the ATP-binding affinity of the ATP-hydrolyzing subunit KdpB by the formation of a transient KdpB/KdpC/ATP ternary complex. The sequence is that of Potassium-transporting ATPase KdpC subunit from Methanosphaerula palustris (strain ATCC BAA-1556 / DSM 19958 / E1-9c).